Consider the following 232-residue polypeptide: Large ribosomal subunit protein uL1 (232 aa).

The protein belongs to the universal ribosomal protein uL1 family. As to quaternary structure, part of the 50S ribosomal subunit.

Functionally, binds directly to 23S rRNA. The L1 stalk is quite mobile in the ribosome, and is involved in E site tRNA release. Protein L1 is also a translational repressor protein, it controls the translation of the L11 operon by binding to its mRNA. The sequence is that of Large ribosomal subunit protein uL1 from Xanthomonas campestris pv. campestris (strain B100).